A 325-amino-acid polypeptide reads, in one-letter code: LIM and senescent cell antigen-like-containing domain protein 1 (325 aa).

At Ala-2 the chain carries N-acetylalanine. 5 consecutive LIM zinc-binding domains span residues 10 to 62 (CERC…CEHD), 71 to 121 (CHQC…CRPC), 135 to 184 (CQKC…CLPC), 193 to 243 (CGAC…CETH), and 252 to 303 (CFHC…CKKC).

In terms of assembly, component of the heterotrimeric IPP (ILK-PINCH-PARVIN) complex composed of ILK, LIMS1/PINCH and PARVA; the complex binds to F-actin via the C-terminal tail of LIMS1 and the N-terminal region of PARVA, promoting F-actin filament bundling. Formation of the IPP complex is dependent on protein kinase C and precedes integrin-mediated cell adhesion and spreading. Competes with LIMS2 for interaction with ILK. Interacts (via LIM zinc-binding 5) with TGFB1I1. Interacts with SH3/SH2 adapter NCK2, thereby linking the complex to cell surface receptors. Expressed in most tissues except in the brain.

It localises to the cell junction. It is found in the focal adhesion. Its subcellular location is the cell membrane. Its function is as follows. Within the IPP (ILK-PINCH-PARVIN) complex, binds to F-actin, promoting F-actin bundling, a process required to generate force for actin cytoskeleton reorganization and subsequent dynamic cell adhesion events such as cell spreading and migration. This chain is LIM and senescent cell antigen-like-containing domain protein 1 (LIMS1), found in Homo sapiens (Human).